The sequence spans 503 residues: Lysine--tRNA ligase (503 aa).

Mg(2+)-binding residues include Glu-413 and Glu-420.

This sequence belongs to the class-II aminoacyl-tRNA synthetase family. As to quaternary structure, homodimer. It depends on Mg(2+) as a cofactor.

The protein localises to the cytoplasm. It catalyses the reaction tRNA(Lys) + L-lysine + ATP = L-lysyl-tRNA(Lys) + AMP + diphosphate. The protein is Lysine--tRNA ligase of Actinobacillus succinogenes (strain ATCC 55618 / DSM 22257 / CCUG 43843 / 130Z).